The sequence spans 85 residues: Small ribosomal subunit protein bS16c (85 aa).

This sequence belongs to the bacterial ribosomal protein bS16 family.

The protein localises to the plastid. Its subcellular location is the chloroplast. The protein is Small ribosomal subunit protein bS16c of Nicotiana tabacum (Common tobacco).